The primary structure comprises 356 residues: Peptide chain release factor 1 (356 aa).

Position 233 is an N5-methylglutamine (Gln-233).

The protein belongs to the prokaryotic/mitochondrial release factor family. In terms of processing, methylated by PrmC. Methylation increases the termination efficiency of RF1.

It localises to the cytoplasm. In terms of biological role, peptide chain release factor 1 directs the termination of translation in response to the peptide chain termination codons UAG and UAA. In Bacillus subtilis (strain 168), this protein is Peptide chain release factor 1 (prfA).